A 166-amino-acid polypeptide reads, in one-letter code: Ureidoglycolate lyase (166 aa).

This sequence belongs to the ureidoglycolate lyase family. In terms of assembly, homodimer. Ni(2+) is required as a cofactor.

It catalyses the reaction (S)-ureidoglycolate = urea + glyoxylate. Its pathway is nitrogen metabolism; (S)-allantoin degradation. Its function is as follows. Catalyzes the catabolism of the allantoin degradation intermediate (S)-ureidoglycolate, generating urea and glyoxylate. Involved in the utilization of allantoin as nitrogen source. The polypeptide is Ureidoglycolate lyase (Rhizobium leguminosarum bv. trifolii (strain WSM2304)).